A 160-amino-acid chain; its full sequence is Ribonuclease H (160 aa).

One can recognise an RNase H type-1 domain in the interval 1-157 (MNIEIYTDGA…CDRLAVEACQ (157 aa)). D8, E49, D85, and D149 together coordinate Mg(2+).

The protein belongs to the RNase H family. Monomer. The cofactor is Mg(2+).

It localises to the cytoplasm. The enzyme catalyses Endonucleolytic cleavage to 5'-phosphomonoester.. In terms of biological role, endonuclease that specifically degrades the RNA of RNA-DNA hybrids. In Treponema denticola (strain ATCC 35405 / DSM 14222 / CIP 103919 / JCM 8153 / KCTC 15104), this protein is Ribonuclease H.